The primary structure comprises 132 residues: Fatty acid-binding protein type 3 (132 aa).

The protein belongs to the calycin superfamily. Fatty-acid binding protein (FABP) family.

The sequence is that of Fatty acid-binding protein type 3 from Fasciola hepatica (Liver fluke).